The following is a 300-amino-acid chain: 4-hydroxy-tetrahydrodipicolinate synthase (300 aa).

Thr-46 serves as a coordination point for pyruvate. Tyr-134 acts as the Proton donor/acceptor in catalysis. The active-site Schiff-base intermediate with substrate is Lys-162. Val-204 contributes to the pyruvate binding site.

This sequence belongs to the DapA family. As to quaternary structure, homotetramer; dimer of dimers.

Its subcellular location is the cytoplasm. It catalyses the reaction L-aspartate 4-semialdehyde + pyruvate = (2S,4S)-4-hydroxy-2,3,4,5-tetrahydrodipicolinate + H2O + H(+). It functions in the pathway amino-acid biosynthesis; L-lysine biosynthesis via DAP pathway; (S)-tetrahydrodipicolinate from L-aspartate: step 3/4. Catalyzes the condensation of (S)-aspartate-beta-semialdehyde [(S)-ASA] and pyruvate to 4-hydroxy-tetrahydrodipicolinate (HTPA). The chain is 4-hydroxy-tetrahydrodipicolinate synthase from Heliobacterium modesticaldum (strain ATCC 51547 / Ice1).